The following is a 334-amino-acid chain: rRNA 2'-O-methyltransferase fibrillarin (334 aa).

Over residues 1–93 (MEGRGGSRGG…GGKPAAGGKP (93 aa)) the composition is skewed to gly residues. Positions 1-94 (MEGRGGSRGG…GKPAAGGKPG (94 aa)) are disordered. Residues 184–185 (TT), 203–204 (EL), 228–229 (DA), and 248–251 (DVAQ) each bind S-adenosyl-L-methionine.

Belongs to the methyltransferase superfamily. Fibrillarin family. In terms of assembly, component of box C/D small nucleolar ribonucleoprotein (snoRNP) particles. It is associated with the U3, U8 and U13 small nuclear RNAs. Part of the small subunit (SSU) processome, composed of more than 70 proteins and the RNA chaperone small nucleolar RNA (snoRNA) U3. Post-translationally, by homology to other fibrillarins, some or all of the N-terminal domain arginines are modified to asymmetric dimethylarginine (DMA).

The protein localises to the nucleus. It localises to the nucleolus. The enzyme catalyses L-glutaminyl-[histone H2A] + S-adenosyl-L-methionine = N(5)-methyl-L-glutaminyl-[histone H2A] + S-adenosyl-L-homocysteine + H(+). Its function is as follows. S-adenosyl-L-methionine-dependent methyltransferase that has the ability to methylate both RNAs and proteins. Involved in pre-rRNA processing. Utilizes the methyl donor S-adenosyl-L-methionine to catalyze the site-specific 2'-hydroxyl methylation of ribose moieties in pre-ribosomal RNA. Site specificity is provided by a guide RNA that base pairs with the substrate. Methylation occurs at a characteristic distance from the sequence involved in base pairing with the guide RNA. Also acts as a protein methyltransferase by mediating methylation of 'Gln-105' of histone H2A (H2AQ105me), a modification that impairs binding of the FACT complex and is specifically present at 35S ribosomal DNA locus. Part of the small subunit (SSU) processome, first precursor of the small eukaryotic ribosomal subunit. During the assembly of the SSU processome in the nucleolus, many ribosome biogenesis factors, an RNA chaperone and ribosomal proteins associate with the nascent pre-rRNA and work in concert to generate RNA folding, modifications, rearrangements and cleavage as well as targeted degradation of pre-ribosomal RNA by the RNA exosome. This Dictyostelium discoideum (Social amoeba) protein is rRNA 2'-O-methyltransferase fibrillarin (fbl).